We begin with the raw amino-acid sequence, 305 residues long: Phosphatidylglycerol--prolipoprotein diacylglyceryl transferase (305 aa).

3 consecutive transmembrane segments (helical) span residues 10–30, 59–79, and 92–112; these read FLIS…GAII, LMLG…AFEW, and LTTG…STVI. R140 provides a ligand contact to a 1,2-diacyl-sn-glycero-3-phospho-(1'-sn-glycerol). The next 2 membrane-spanning stretches (helical) occupy residues 182 to 202 and 260 to 280; these read LFHP…GILL and IRVA…LIFL.

The protein belongs to the Lgt family.

Its subcellular location is the cell membrane. It carries out the reaction L-cysteinyl-[prolipoprotein] + a 1,2-diacyl-sn-glycero-3-phospho-(1'-sn-glycerol) = an S-1,2-diacyl-sn-glyceryl-L-cysteinyl-[prolipoprotein] + sn-glycerol 1-phosphate + H(+). It participates in protein modification; lipoprotein biosynthesis (diacylglyceryl transfer). Its function is as follows. Catalyzes the transfer of the diacylglyceryl group from phosphatidylglycerol to the sulfhydryl group of the N-terminal cysteine of a prolipoprotein, the first step in the formation of mature lipoproteins. This Chloroflexus aggregans (strain MD-66 / DSM 9485) protein is Phosphatidylglycerol--prolipoprotein diacylglyceryl transferase.